The primary structure comprises 423 residues: Glucose-6-phosphate isomerase (423 aa).

Catalysis depends on E279, which acts as the Proton donor. Residues H300 and K413 contribute to the active site.

Belongs to the GPI family.

Its subcellular location is the cytoplasm. It carries out the reaction alpha-D-glucose 6-phosphate = beta-D-fructose 6-phosphate. It functions in the pathway carbohydrate biosynthesis; gluconeogenesis. The protein operates within carbohydrate degradation; glycolysis; D-glyceraldehyde 3-phosphate and glycerone phosphate from D-glucose: step 2/4. Functionally, catalyzes the reversible isomerization of glucose-6-phosphate to fructose-6-phosphate. The chain is Glucose-6-phosphate isomerase from Acholeplasma laidlawii (strain PG-8A).